The following is a 519-amino-acid chain: Nitrogen fixation regulatory protein (519 aa).

Positions 23–93 (LPEIFRQTVE…QALWGRLAQK (71 aa)) constitute a PAS 1 domain. Positions 94–148 (KPWSGVLVNRRKDKTLYLAELTVAPVLNEAGETIYYLGMHRDTSELHELEQRVNN) constitute a PAC domain. Positions 151 to 217 (LMIEAVVNAA…FETLENQGSA (67 aa)) constitute a PAS 2 domain. The region spanning 302–517 (AAIHRLQGPV…RIVVELPFSA (216 aa)) is the Histidine kinase domain. His-305 carries the phosphohistidine; by autocatalysis modification.

Requires FAD as cofactor.

The enzyme catalyses ATP + protein L-histidine = ADP + protein N-phospho-L-histidine.. Its function is as follows. Required for the inhibition of NifA activity in response to oxygen and low level of fixed nitrogen. This Azotobacter vinelandii protein is Nitrogen fixation regulatory protein (nifL).